The primary structure comprises 436 residues: Histidine--tRNA ligase (436 aa).

It belongs to the class-II aminoacyl-tRNA synthetase family. In terms of assembly, homodimer.

It is found in the cytoplasm. It catalyses the reaction tRNA(His) + L-histidine + ATP = L-histidyl-tRNA(His) + AMP + diphosphate + H(+). This Prochlorococcus marinus (strain MIT 9313) protein is Histidine--tRNA ligase.